The chain runs to 266 residues: Ribosomal RNA small subunit methyltransferase J (266 aa).

Residues arginine 109–aspartate 110, glutamate 125–arginine 126, and aspartate 185 each bind S-adenosyl-L-methionine.

The protein belongs to the methyltransferase superfamily. RsmJ family.

It localises to the cytoplasm. It catalyses the reaction guanosine(1516) in 16S rRNA + S-adenosyl-L-methionine = N(2)-methylguanosine(1516) in 16S rRNA + S-adenosyl-L-homocysteine + H(+). Functionally, specifically methylates the guanosine in position 1516 of 16S rRNA. This is Ribosomal RNA small subunit methyltransferase J from Cellvibrio japonicus (strain Ueda107) (Pseudomonas fluorescens subsp. cellulosa).